We begin with the raw amino-acid sequence, 631 residues long: Beta-galactosidase-1-like protein 3 (631 aa).

E203 acts as the Proton donor in catalysis. The Nucleophile role is filled by E277.

The protein belongs to the glycosyl hydrolase 35 family.

The polypeptide is Beta-galactosidase-1-like protein 3 (Glb1l3) (Rattus norvegicus (Rat)).